A 105-amino-acid polypeptide reads, in one-letter code: Dynein axonemal light chain 4 (105 aa).

The protein belongs to the dynein light chain family. In terms of assembly, consists of at least two heavy chains and a number of intermediate and light chains.

The protein localises to the cytoplasm. The protein resides in the cytoskeleton. It is found in the cilium axoneme. In terms of biological role, force generating protein of respiratory cilia. Produces force towards the minus ends of microtubules. Dynein has ATPase activity. This is Dynein axonemal light chain 4 (DNAL4) from Bos taurus (Bovine).